The primary structure comprises 299 residues: ATP phosphoribosyltransferase (299 aa).

The protein belongs to the ATP phosphoribosyltransferase family. Long subfamily. As to quaternary structure, equilibrium between an active dimeric form, an inactive hexameric form and higher aggregates. Interconversion between the various forms is largely reversible and is influenced by the natural substrates and inhibitors of the enzyme. The cofactor is Mg(2+).

The protein resides in the cytoplasm. The catalysed reaction is 1-(5-phospho-beta-D-ribosyl)-ATP + diphosphate = 5-phospho-alpha-D-ribose 1-diphosphate + ATP. It participates in amino-acid biosynthesis; L-histidine biosynthesis; L-histidine from 5-phospho-alpha-D-ribose 1-diphosphate: step 1/9. With respect to regulation, feedback inhibited by histidine. Its function is as follows. Catalyzes the condensation of ATP and 5-phosphoribose 1-diphosphate to form N'-(5'-phosphoribosyl)-ATP (PR-ATP). Has a crucial role in the pathway because the rate of histidine biosynthesis seems to be controlled primarily by regulation of HisG enzymatic activity. This chain is ATP phosphoribosyltransferase, found in Shigella flexneri serotype 5b (strain 8401).